Consider the following 405-residue polypeptide: Aspartokinase (405 aa).

7-10 is an ATP binding site; the sequence is KYGG. Residue 25–30 participates in substrate binding; that stretch reads RIAHYR. Residue S41 participates in ATP binding. Residues 47–49, E74, 125–126, 150–153, and S153 each bind substrate; these read TDE, LE, and RGGS. Residues 173 to 174, 179 to 184, and R209 contribute to the ATP site; these read TD and YTTDPH. 2 ACT domains span residues 263–342 and 344–405; these read IGLI…IAKV and IVGV…LDKA. Residues D270, 288-290, Q294, 355-356, 369-370, and 376-377 each bind substrate; these read AVD, VP, NI, and SE.

The protein belongs to the aspartokinase family. Tetramer consisting of 2 isoforms Alpha (catalytic and regulation) and of a homodimer of 2 isoforms Beta (regulation).

The enzyme catalyses L-aspartate + ATP = 4-phospho-L-aspartate + ADP. Its pathway is amino-acid biosynthesis; L-lysine biosynthesis via DAP pathway; (S)-tetrahydrodipicolinate from L-aspartate: step 1/4. It participates in amino-acid biosynthesis; L-methionine biosynthesis via de novo pathway; L-homoserine from L-aspartate: step 1/3. The protein operates within amino-acid biosynthesis; L-threonine biosynthesis; L-threonine from L-aspartate: step 1/5. Its function is as follows. Catalyzes the phosphorylation of the beta-carboxyl group of aspartic acid with ATP to yield 4-phospho-L-aspartate, which is involved in the branched biosynthetic pathway leading to the biosynthesis of amino acids lysine, threonine, isoleucine and methionine. The polypeptide is Aspartokinase (ask) (Thermus thermophilus (strain ATCC BAA-163 / DSM 7039 / HB27)).